A 52-amino-acid polypeptide reads, in one-letter code: uncharacterized protein (52 aa).

This is an uncharacterized protein from Treponema pallidum (strain Nichols).